A 62-amino-acid polypeptide reads, in one-letter code: Photosystem II reaction center protein Z (62 aa).

Transmembrane regions (helical) follow at residues Ala-8 to Ala-28 and Phe-41 to Ile-61.

The protein belongs to the PsbZ family. PSII is composed of 1 copy each of membrane proteins PsbA, PsbB, PsbC, PsbD, PsbE, PsbF, PsbH, PsbI, PsbJ, PsbK, PsbL, PsbM, PsbT, PsbY, PsbZ, Psb30/Ycf12, at least 3 peripheral proteins of the oxygen-evolving complex and a large number of cofactors. It forms dimeric complexes.

It is found in the plastid. Its subcellular location is the chloroplast thylakoid membrane. In terms of biological role, may control the interaction of photosystem II (PSII) cores with the light-harvesting antenna, regulates electron flow through the 2 photosystem reaction centers. PSII is a light-driven water plastoquinone oxidoreductase, using light energy to abstract electrons from H(2)O, generating a proton gradient subsequently used for ATP formation. In Spinacia oleracea (Spinach), this protein is Photosystem II reaction center protein Z.